The chain runs to 190 residues: C-type lectin domain family 5 member A (190 aa).

At Met-1–His-4 the chain is on the cytoplasmic side. The helical; Signal-anchor for type II membrane protein transmembrane segment at Met-5–Leu-25 threads the bilayer. Residues Tyr-26–Lys-190 lie on the Extracellular side of the membrane. N-linked (GlcNAc...) asparagine glycosylation is found at Asn-51, Asn-146, and Asn-153. The C-type lectin domain maps to His-80–Glu-186. 2 cysteine pairs are disulfide-bonded: Cys-101–Cys-185 and Cys-163–Cys-177.

Monomer. Homodimer. The majority of CLEC5A is expressed as a monomeric form on macrophages. Interacts with TYROBP/DAP12. The interaction with TYROBP is required for CLEC5 cell surface expression. Interacts with HCST/DAP10. Forms a CLEC5A/TYROBP/HCST trimolecular complex depending almost solely on TYROBP. Post-translationally, N-glycosylated. Contains sialic acid residues. As to expression, strong expression in bone marrow cells and thioglycollate-induced neutrophils (at protein level). Expressed on granulocytes and monocytes from bone marrow and peripheral blood. Expressed in macrophage cell line J-774, but not in T-cell lines, B-cell lines, or mast cell lines.

It localises to the cell membrane. In terms of biological role, functions as a positive regulator of osteoclastogenesis. Cell surface receptor that signals via TYROBP. Regulates inflammatory responses. This Mus musculus (Mouse) protein is C-type lectin domain family 5 member A (Clec5a).